The chain runs to 402 residues: Hyaluronan and proteoglycan link protein 4 (402 aa).

A signal peptide spans 1–29 (MVCARAALGPGALWAAAWGVLLLTAPAGA). The region spanning 46-161 (SVVVQTAPGQ…DAGMVKLDLE (116 aa)) is the Ig-like C2-type domain. Disulfide bonds link C68-C143, C185-C266, C209-C230, C293-C363, and C318-C339. An N-linked (GlcNAc...) asparagine glycan is attached at N132. Link domains lie at 163–268 (VVFP…FCFT) and 273–365 (GRVF…YCYR).

The protein belongs to the HAPLN family. As to expression, expressed predominantly in brain.

Its subcellular location is the secreted. The protein resides in the extracellular space. The protein localises to the extracellular matrix. Its function is as follows. Essential for the proper localization of brevican (BCAN), mainly as a perineuronal nets (PNNs)-type deposition in the brainstem and cerebellum thereby playing a key role in the formation and structural organization of PNNs. Contributes to the formation and transmission of inhibitory GABAergic synapses between Purkinje cells and deep cerebellar nuclei neurons. The polypeptide is Hyaluronan and proteoglycan link protein 4 (HAPLN4) (Homo sapiens (Human)).